Reading from the N-terminus, the 101-residue chain is Small ribosomal subunit protein uS14 (101 aa).

It belongs to the universal ribosomal protein uS14 family. Part of the 30S ribosomal subunit. Contacts proteins S3 and S10.

Its function is as follows. Binds 16S rRNA, required for the assembly of 30S particles and may also be responsible for determining the conformation of the 16S rRNA at the A site. The chain is Small ribosomal subunit protein uS14 from Albidiferax ferrireducens (strain ATCC BAA-621 / DSM 15236 / T118) (Rhodoferax ferrireducens).